Here is a 415-residue protein sequence, read N- to C-terminus: Methylaspartate ammonia-lyase 2 (415 aa).

Glutamine 173 is a (2S,3S)-3-methyl-L-aspartate binding site. Mg(2+) contacts are provided by aspartate 238, glutamate 273, and aspartate 307. Glutamine 329 contributes to the (2S,3S)-3-methyl-L-aspartate binding site. The active-site Proton acceptor is the lysine 331. Residue 360–361 (TC) coordinates (2S,3S)-3-methyl-L-aspartate.

The protein belongs to the methylaspartate ammonia-lyase family. Homodimer. Mg(2+) is required as a cofactor.

The enzyme catalyses (2S,3S)-3-methyl-L-aspartate = mesaconate + NH4(+). It participates in amino-acid degradation; L-glutamate degradation via mesaconate pathway; acetate and pyruvate from L-glutamate: step 2/4. Involved in the methylaspartate cycle. Catalyzes the formation of the alpha,beta-unsaturated bond by the reversible anti elimination of ammonia from L-threo-beta-methylaspartate (L-threo-(2S,3S)-3-methylaspartate) to give mesaconate. The protein is Methylaspartate ammonia-lyase 2 of Carboxydothermus hydrogenoformans (strain ATCC BAA-161 / DSM 6008 / Z-2901).